Here is a 305-residue protein sequence, read N- to C-terminus: tRNA pseudouridine synthase B (305 aa).

Aspartate 48 (nucleophile) is an active-site residue.

Belongs to the pseudouridine synthase TruB family. Type 1 subfamily.

It catalyses the reaction uridine(55) in tRNA = pseudouridine(55) in tRNA. Responsible for synthesis of pseudouridine from uracil-55 in the psi GC loop of transfer RNAs. The polypeptide is tRNA pseudouridine synthase B (Pseudomonas fluorescens (strain ATCC BAA-477 / NRRL B-23932 / Pf-5)).